The sequence spans 214 residues: Adenylate kinase (214 aa).

Position 10–15 (10–15) interacts with ATP; it reads GAGKGT. The interval 30–59 is NMP; that stretch reads STGDMLRAAIKAGTELGKQAKTLMDAGQLV. AMP is bound by residues threonine 31, arginine 36, 57–59, 85–88, and glutamine 92; these read QLV and GFPR. Positions 122–159 are LID; the sequence is GRRVHPASGRSYHVVYNPPKVEGKDDVTGEDLIIRADD. ATP-binding positions include arginine 123 and 132–133; that span reads SY. AMP-binding residues include arginine 156 and arginine 167. An ATP-binding site is contributed by glutamine 200.

It belongs to the adenylate kinase family. Monomer.

It localises to the cytoplasm. The catalysed reaction is AMP + ATP = 2 ADP. It functions in the pathway purine metabolism; AMP biosynthesis via salvage pathway; AMP from ADP: step 1/1. In terms of biological role, catalyzes the reversible transfer of the terminal phosphate group between ATP and AMP. Plays an important role in cellular energy homeostasis and in adenine nucleotide metabolism. This is Adenylate kinase from Actinobacillus succinogenes (strain ATCC 55618 / DSM 22257 / CCUG 43843 / 130Z).